A 64-amino-acid polypeptide reads, in one-letter code: uncharacterized protein (64 aa).

Positions methionine 1–serine 64 are disordered. A compositionally biased stretch (gly residues) spans arginine 16–glycine 28.

This is an uncharacterized protein from Homo sapiens (Human).